The chain runs to 179 residues: Guanosine-3',5'-bis(diphosphate) 3'-pyrophosphohydrolase MESH1 (179 aa).

At glycine 2 the chain carries N-acetylglycine. At lysine 25 the chain carries N6-acetyllysine. The region spanning tyrosine 32–leucine 127 is the HD domain. Positions 35, 61, and 62 each coordinate Mn(2+). Residues glutamate 65 and aspartate 66 each act as nucleophile in the active site. Lysine 97 carries the N6-acetyllysine modification. Aspartate 122 contributes to the Mn(2+) binding site. Lysine 123 bears the N6-acetyllysine mark.

It belongs to the MESH1 family. The cofactor is Mn(2+).

The enzyme catalyses guanosine 3',5'-bis(diphosphate) + H2O = GDP + diphosphate + H(+). In terms of biological role, ppGpp hydrolyzing enzyme involved in starvation response. The sequence is that of Guanosine-3',5'-bis(diphosphate) 3'-pyrophosphohydrolase MESH1 (Hddc3) from Mus musculus (Mouse).